The chain runs to 624 residues: FAD-dependent monooxygenase apdD (624 aa).

Glutamate 73 and aspartate 359 together coordinate FAD.

It belongs to the paxM FAD-dependent monooxygenase family. Requires FAD as cofactor.

Its pathway is secondary metabolite biosynthesis. FAD-dependent monooxygenase; part of the gene cluster that mediates the biosynthesis of aspyridones. The polyketide-amino acid backbone preaspyridone A is first assembled by the PKS-NRPS hybrid apdA. The assembly of preaspyridone A is initiated by loading of malonyl-CoA onto apdA, followed by decarboxylation to yield the acetyl starter unit. The growing polyketide chain then elongates into a tetraketide. The adpA PKS module catalyzes three Claisen condensations, as well as beta-keto processing and methylation. Alpha-methylation step during polyketide synthesis is a prerequisite and a key checkpoint for chain transfer between PKS and NRPS modules. The downstream NRPS module contains the condensation (C), adenylation (A), and thiolation (T) domains and catalyzes the incorporation of tyrosine via the formation of the L-tyrosinyl-thioester and the amide linkage between L-tyrosinyl-thioester and the tetraketide. The bimodular assembly line is terminated with a reductase (R) domain that facilitates formation and release of the tetramic acid product. Because apdA lacks a designated enoylreductase (ER) domain, the required activity is provided the enoyl reductase apdC. ApdC appears to operate with different stereoselectivity in different PKS cycle. Combined with apdC, apdA is proposed to synthesize preaspyridone A via about 20 enzymatic steps. A number of oxidative steps performed successively by the cytochrome P450 monooxygenases apdE and apdB are required for the conversion of preaspyridone A to aspyridone A. The cytochrome P450 monooxygenase apdE is responsible for the oxidative dephenylation of preaspyridone A. Finally, the predicted FAD-dependent monooxygenase apdD and the acyl-CoA dehydrogenase apdG may be involved in the transformation of aspyridone A into aspyridone B. The sequence is that of FAD-dependent monooxygenase apdD from Emericella nidulans (strain FGSC A4 / ATCC 38163 / CBS 112.46 / NRRL 194 / M139) (Aspergillus nidulans).